Reading from the N-terminus, the 148-residue chain is MALEQTLKKDWYSILGADPSANMSDLKQKYQKLILLYHPDKQSADVPAGTMEECMQKFIEIDQAWKILGNEETKKKYDLQRHEDELRNVGPVDAQVRLEEMSWNQGDESFFLSCRCGGKYTVSKDEAQEATLISCDACSLIVELLHQS.

The 72-residue stretch at 10–81 folds into the J domain; the sequence is DWYSILGADP…ETKKKYDLQR (72 aa). The region spanning 92–147 is the DPH-type MB domain; the sequence is VDAQVRLEEMSWNQGDESFFLSCRCGGKYTVSKDEAQEATLISCDACSLIVELLHQ. Residues C114, C116, C135, and C138 each coordinate Zn(2+).

Belongs to the DPH4 family. As to quaternary structure, monomer and homooligomer. Iron binding promotes oligomerization. As to expression, detected in heart, brain, spleen, lung, liver, kidney and testis.

It is found in the cytoplasm. Its subcellular location is the cytoskeleton. Its pathway is protein modification; peptidyl-diphthamide biosynthesis. The iron-bound form is redox-active and can function as electron carrier. Stimulates the ATPase activity of several Hsp70-type chaperones. This ability is enhanced by iron-binding. Plays a role in the diphthamide biosynthesis, a post-translational modification of histidine which occurs in translation elongation factor 2 (EEF2). This is DnaJ homolog subfamily C member 24 (Dnajc24) from Mus musculus (Mouse).